The sequence spans 188 residues: Cytidylate kinase (188 aa).

ATP is bound at residue 7–15 (GKIGSGKST).

Belongs to the cytidylate kinase family. Type 2 subfamily.

It is found in the cytoplasm. The catalysed reaction is CMP + ATP = CDP + ADP. It carries out the reaction dCMP + ATP = dCDP + ADP. In Thermoplasma acidophilum (strain ATCC 25905 / DSM 1728 / JCM 9062 / NBRC 15155 / AMRC-C165), this protein is Cytidylate kinase (cmk).